We begin with the raw amino-acid sequence, 896 residues long: FHIP family protein C05D11.8 (896 aa).

Positions 823 to 865 (STASSPRTSDDHDPTLFYGRSTMAPPGRKPLLREPSRQETLDD) are disordered. The span at 853–865 (LLREPSRQETLDD) shows a compositional bias: basic and acidic residues.

It belongs to the FHIP family.

The chain is FHIP family protein C05D11.8 from Caenorhabditis elegans.